Consider the following 56-residue polypeptide: Large ribosomal subunit protein bL32 (56 aa).

Residues Met-1–Ala-21 are disordered. Basic residues predominate over residues Arg-7 to Arg-16.

The protein belongs to the bacterial ribosomal protein bL32 family.

The protein is Large ribosomal subunit protein bL32 of Vibrio cholerae serotype O1 (strain ATCC 39541 / Classical Ogawa 395 / O395).